The sequence spans 347 residues: NADH-quinone oxidoreductase subunit H (347 aa).

A run of 8 helical transmembrane segments spans residues isoleucine 14–leucine 34, alanine 82–isoleucine 102, valine 115–glycine 135, isoleucine 161–valine 181, leucine 198–leucine 218, alanine 258–leucine 278, tryptophan 285–isoleucine 305, and leucine 321–leucine 341.

The protein belongs to the complex I subunit 1 family. NDH-1 is composed of 14 different subunits. Subunits NuoA, H, J, K, L, M, N constitute the membrane sector of the complex.

It is found in the cell inner membrane. It carries out the reaction a quinone + NADH + 5 H(+)(in) = a quinol + NAD(+) + 4 H(+)(out). Functionally, NDH-1 shuttles electrons from NADH, via FMN and iron-sulfur (Fe-S) centers, to quinones in the respiratory chain. The immediate electron acceptor for the enzyme in this species is believed to be ubiquinone. Couples the redox reaction to proton translocation (for every two electrons transferred, four hydrogen ions are translocated across the cytoplasmic membrane), and thus conserves the redox energy in a proton gradient. This subunit may bind ubiquinone. In Allorhizobium ampelinum (strain ATCC BAA-846 / DSM 112012 / S4) (Agrobacterium vitis (strain S4)), this protein is NADH-quinone oxidoreductase subunit H.